Reading from the N-terminus, the 450-residue chain is 5-amino-6-(D-ribitylamino)uracil--L-tyrosine 4-hydroxyphenyl transferase (450 aa).

The interval 1–24 (MPDVPETVGTPDGSTEFEHRPTTD) is disordered. Residues 82–350 (VTFVANLNNN…MIAVSRLFLD (269 aa)) enclose the Radical SAM core domain. [4Fe-4S] cluster is bound by residues cysteine 96, cysteine 100, and cysteine 103. Residues 430–450 (PDADVLGPQLGPRADGTPLLD) are disordered.

Belongs to the radical SAM superfamily. CofH family. As to quaternary structure, consists of two subunits, CofG and CofH. Requires [4Fe-4S] cluster as cofactor.

The enzyme catalyses 5-amino-6-(D-ribitylamino)uracil + L-tyrosine + S-adenosyl-L-methionine = 5-amino-5-(4-hydroxybenzyl)-6-(D-ribitylimino)-5,6-dihydrouracil + 2-iminoacetate + 5'-deoxyadenosine + L-methionine + H(+). Its pathway is cofactor biosynthesis; coenzyme F0 biosynthesis. In terms of biological role, catalyzes the radical-mediated synthesis of 5-amino-5-(4-hydroxybenzyl)-6-(D-ribitylimino)-5,6-dihydrouracil from 5-amino-6-(D-ribitylamino)uracil and L-tyrosine. The protein is 5-amino-6-(D-ribitylamino)uracil--L-tyrosine 4-hydroxyphenyl transferase of Haloarcula marismortui (strain ATCC 43049 / DSM 3752 / JCM 8966 / VKM B-1809) (Halobacterium marismortui).